We begin with the raw amino-acid sequence, 283 residues long: S-methyl-5'-thioadenosine phosphorylase (283 aa).

Thr-18 lines the phosphate pocket. Lys-51 carries the post-translational modification N6-acetyllysine. Phosphate is bound by residues 60-61 (RH) and 93-94 (TA). Residue Met-196 participates in substrate binding. Thr-197 lines the phosphate pocket. 220-222 (DYD) contacts substrate.

It belongs to the PNP/MTAP phosphorylase family. MTAP subfamily. Homotrimer.

The protein resides in the cytoplasm. It localises to the nucleus. It carries out the reaction S-methyl-5'-thioadenosine + phosphate = 5-(methylsulfanyl)-alpha-D-ribose 1-phosphate + adenine. The protein operates within amino-acid biosynthesis; L-methionine biosynthesis via salvage pathway; S-methyl-5-thio-alpha-D-ribose 1-phosphate from S-methyl-5'-thioadenosine (phosphorylase route): step 1/1. Functionally, catalyzes the reversible phosphorylation of S-methyl-5'-thioadenosine (MTA) to adenine and 5-methylthioribose-1-phosphate. Involved in the breakdown of MTA, a major by-product of polyamine biosynthesis. Responsible for the first step in the methionine salvage pathway after MTA has been generated from S-adenosylmethionine. Has broad substrate specificity with 6-aminopurine nucleosides as preferred substrates. In Bos taurus (Bovine), this protein is S-methyl-5'-thioadenosine phosphorylase.